A 320-amino-acid chain; its full sequence is Cytochrome f (320 aa).

The N-terminal stretch at 1–35 (MQTRKTLSWIKEEITRSISLSLMLSIITHASLSNA) is a signal peptide. Heme-binding residues include Tyr-36, Cys-56, Cys-59, and His-60. Residues 286 to 306 (VQGLLFFLTSVLLAQIFLVLK) traverse the membrane as a helical segment.

This sequence belongs to the cytochrome f family. The 4 large subunits of the cytochrome b6-f complex are cytochrome b6, subunit IV (17 kDa polypeptide, petD), cytochrome f and the Rieske protein, while the 4 small subunits are PetG, PetL, PetM and PetN. The complex functions as a dimer. It depends on heme as a cofactor.

It is found in the plastid. Its subcellular location is the chloroplast thylakoid membrane. Component of the cytochrome b6-f complex, which mediates electron transfer between photosystem II (PSII) and photosystem I (PSI), cyclic electron flow around PSI, and state transitions. In Pelargonium hortorum (Common geranium), this protein is Cytochrome f.